Here is a 431-residue protein sequence, read N- to C-terminus: tRNA(Ile)-lysidine synthase (431 aa).

25–30 is a binding site for ATP; that stretch reads SGGLDS.

Belongs to the tRNA(Ile)-lysidine synthase family.

It is found in the cytoplasm. It catalyses the reaction cytidine(34) in tRNA(Ile2) + L-lysine + ATP = lysidine(34) in tRNA(Ile2) + AMP + diphosphate + H(+). In terms of biological role, ligates lysine onto the cytidine present at position 34 of the AUA codon-specific tRNA(Ile) that contains the anticodon CAU, in an ATP-dependent manner. Cytidine is converted to lysidine, thus changing the amino acid specificity of the tRNA from methionine to isoleucine. The chain is tRNA(Ile)-lysidine synthase from Legionella pneumophila (strain Lens).